Reading from the N-terminus, the 543-residue chain is Protein SGE1 (543 aa).

The Cytoplasmic segment spans residues 1-8 (MKSTLSLT). The helical transmembrane segment at 9–29 (LCVISLLLTLFLAALDIVIVV) threads the bilayer. Topologically, residues 30–41 (TLYDTIGIKFHD) are extracellular. Residues 42–62 (FGNIGWLVTGYALSNAVFMLL) traverse the membrane as a helical segment. Topologically, residues 63–79 (WGRLAEILGTKECLMIS) are cytoplasmic. The chain crosses the membrane as a helical span at residues 80–100 (VIVFEIGSLISALSNSMATLI). Residues 101-103 (SGR) are Extracellular-facing. Residues 104 to 124 (VVAGFGGSGIESLAFVVGTSI) traverse the membrane as a helical segment. The Cytoplasmic segment spans residues 125-131 (VRENHRG). The chain crosses the membrane as a helical span at residues 132 to 152 (IMITALAISYVIAEGVGPFIG). At 153 to 162 (GAFNEHLSWR) the chain is on the extracellular side. Residues 163 to 183 (WCFYINLPIGAFAFIILAFCN) form a helical membrane-spanning segment. Residues 184–227 (TSGEPHQKMWLPSKIKKIMNYDYGELLKASFWKNTFEVLVFKLD) are Cytoplasmic-facing. The helical transmembrane segment at 228–248 (MVGIILSSAGFTLLMLGLSFG) threads the bilayer. The Extracellular segment spans residues 249 to 255 (GNNFPWN). The helical transmembrane segment at 256-276 (SGIIICFFTVGPILLLLFCAY) threads the bilayer. The Cytoplasmic portion of the chain corresponds to 277–300 (DFHFLSLSGLHYDNKRIKPLLTWN). Residues 301–321 (IASNCGIFTSSITGFLSCFAY) traverse the membrane as a helical segment. The Extracellular segment spans residues 322–341 (ELQSAYLVQLYQLVFKKKPT). Residues 342–362 (LASIHLWELSIPAMIATMAIA) traverse the membrane as a helical segment. Residues 363–373 (YLNSKYGIIKP) are Cytoplasmic-facing. The helical transmembrane segment at 374-394 (AIVFGVLCGIVGSGLFTLING) threads the bilayer. Residues 395-399 (ELSQS) are Extracellular-facing. Residues 400-420 (IGYSILPGIAFGSIFQATLLS) traverse the membrane as a helical segment. Residues 421 to 443 (SQVQITSDDPDFQNKFIEVTAFN) are Cytoplasmic-facing. A helical transmembrane segment spans residues 444 to 464 (SFAKSLGFAFGGNMGAMIFTA). Residues 465 to 508 (SLKNQMRSSQLNIPQFTSVETLLAYSTEHYDGPQSSLSKFINTA) lie on the Extracellular side of the membrane. Residues 509–529 (IHDVFYCALGCYALSFFFGIF) form a helical membrane-spanning segment. At 530 to 543 (TSSKKTTISAKKQQ) the chain is on the cytoplasmic side.

It belongs to the major facilitator superfamily.

The protein resides in the membrane. Functionally, drug export permease. Multi-copy suppressor of loss-of-function mutation of GAL11. Involved specifically in transcription of GAL4-dependent genes. Can link GAL4 with the basal transcription machinery if GAL11 is missing. Confers resistance to 10-N-nonyl acridine orange (NAO) and in general to cationic dyes. The protein is Protein SGE1 (SGE1) of Saccharomyces cerevisiae (strain ATCC 204508 / S288c) (Baker's yeast).